A 307-amino-acid polypeptide reads, in one-letter code: Protoheme IX farnesyltransferase (307 aa).

Helical transmembrane passes span 31–51 (VTQLAVFCAIIGMFLATPGMV), 53–73 (WPVLIGGAAGIWLLAGAAFAI), 103–123 (TLVFSAILGGAGMWLLHVYAN), 125–145 (LTMWLTFATFLGYAVVYTILL), 153–173 (IVIGGLSGAMPPALGWAAVAG), 179–199 (AWFLVLIIFTWTPPHFWALAL), 223–243 (LLHILLYTLIMIAATLLPFVY), 246–266 (SGYIYLAAALALGAGFLAYAW), and 285–305 (ILYLSLLFAALLVDHYFKFVP).

It belongs to the UbiA prenyltransferase family. Protoheme IX farnesyltransferase subfamily.

The protein resides in the cell inner membrane. It carries out the reaction heme b + (2E,6E)-farnesyl diphosphate + H2O = Fe(II)-heme o + diphosphate. It functions in the pathway porphyrin-containing compound metabolism; heme O biosynthesis; heme O from protoheme: step 1/1. Functionally, converts heme B (protoheme IX) to heme O by substitution of the vinyl group on carbon 2 of heme B porphyrin ring with a hydroxyethyl farnesyl side group. The polypeptide is Protoheme IX farnesyltransferase (Cupriavidus taiwanensis (strain DSM 17343 / BCRC 17206 / CCUG 44338 / CIP 107171 / LMG 19424 / R1) (Ralstonia taiwanensis (strain LMG 19424))).